The primary structure comprises 165 residues: uncharacterized protein (165 aa).

Polar residues predominate over residues Gln-22 to Asp-34. A disordered region spans residues Gln-22–Gln-45.

This is an uncharacterized protein from Homo sapiens (Human).